Consider the following 523-residue polypeptide: WD repeat-containing protein YPL247C (523 aa).

The tract at residues 1–64 (MDPFHNGNKR…TTNGGNSKRN (64 aa)) is disordered. The span at 9–40 (KRSSISFGSSQRQPYNKNNYLSGTNGPSSAAQ) shows a compositional bias: polar residues. A Phosphoserine modification is found at Ser-47. The span at 52 to 64 (SGNTTNGGNSKRN) shows a compositional bias: low complexity. Ser-65 carries the phosphoserine modification. 4 WD repeats span residues 173–213 (DVVY…RQFQ), 241–281 (GTFP…YVKT), 285–325 (AHDS…HSTI), and 392–432 (GHGS…MEIN). Residues 436-472 (SKSPSIHGTSLEDPDGDTEMTDGGAGSGLNEDPLSLN) form a disordered region.

Belongs to the WD repeat WDR68 family.

It localises to the cytoplasm. It is found in the nucleus. The protein is WD repeat-containing protein YPL247C of Saccharomyces cerevisiae (strain ATCC 204508 / S288c) (Baker's yeast).